Consider the following 157-residue polypeptide: 2-C-methyl-D-erythritol 2,4-cyclodiphosphate synthase (157 aa).

Residues D8 and H10 each coordinate a divalent metal cation. 4-CDP-2-C-methyl-D-erythritol 2-phosphate contacts are provided by residues 8 to 10 and 34 to 35; these read DVH and HS. A divalent metal cation is bound at residue H42. 4-CDP-2-C-methyl-D-erythritol 2-phosphate-binding positions include 56-58, 61-65, 100-106, 132-135, and F139; these read DIG, FPDTD, AQKPKMA, and TTTE.

Belongs to the IspF family. As to quaternary structure, homotrimer. A divalent metal cation serves as cofactor.

It catalyses the reaction 4-CDP-2-C-methyl-D-erythritol 2-phosphate = 2-C-methyl-D-erythritol 2,4-cyclic diphosphate + CMP. Its pathway is isoprenoid biosynthesis; isopentenyl diphosphate biosynthesis via DXP pathway; isopentenyl diphosphate from 1-deoxy-D-xylulose 5-phosphate: step 4/6. Functionally, involved in the biosynthesis of isopentenyl diphosphate (IPP) and dimethylallyl diphosphate (DMAPP), two major building blocks of isoprenoid compounds. Catalyzes the conversion of 4-diphosphocytidyl-2-C-methyl-D-erythritol 2-phosphate (CDP-ME2P) to 2-C-methyl-D-erythritol 2,4-cyclodiphosphate (ME-CPP) with a corresponding release of cytidine 5-monophosphate (CMP). This chain is 2-C-methyl-D-erythritol 2,4-cyclodiphosphate synthase, found in Alkaliphilus oremlandii (strain OhILAs) (Clostridium oremlandii (strain OhILAs)).